The following is a 512-amino-acid chain: MGCIKSKRKDNLNDDGVDMKTQPVRNTDRTIYVRDPTSNKQQRPVPESQLLPGQRFQAKDPEEQGDIVVALYPYDGIHPDDLSFKKGEKMKVLEEHGEWWKAKSLSSKREGFIPSNYVAKVNTLETEEWFFKDITRKDAERQLLAPGNSAGAFLIRESETLKGSFSLSVRDYDPMHGDVIKHYKIRSLDNGGYYISPRITFPCISDMIKHYQKQSDGLCRRLEKACISPKPQKPWDKDAWEIPRESIKLVKKLGAGQFGEVWMGYYNNSTKVAVKTLKPGTMSAQAFLEEANLMKTLQHDKLVRLYAVVTKEEPIYIITEFMAKGSLLDFLKSDEGSKVLLPKLIDFSAQIAEGMAYIERKNYIHRDLRAANVLVSESLMCKIADFGLARVIEDNEYTAREGAKFPIKWTAPEAINFGCFTIKSDVWSFGILLYEIVTYGKIPYPGRTNADVMTALSQGYRMPRMENCPDELYDIMKMCWKESAEERPTFDYLQSVLDDFYTATEGQYQQQP.

Residues 1–50 are disordered; the sequence is MGCIKSKRKDNLNDDGVDMKTQPVRNTDRTIYVRDPTSNKQQRPVPESQL. The N-myristoyl glycine moiety is linked to residue Gly-2. A lipid anchor (S-palmitoyl cysteine) is attached at Cys-3. The SH3 domain maps to 63–123; sequence EQGDIVVALY…PSNYVAKVNT (61 aa). Residues 129 to 226 form the SH2 domain; it reads WFFKDITRKD…GLCRRLEKAC (98 aa). Tyr-193 carries the phosphotyrosine modification. Ser-228 is subject to Phosphoserine. The 255-residue stretch at 247–501 folds into the Protein kinase domain; the sequence is IKLVKKLGAG…YLQSVLDDFY (255 aa). ATP-binding positions include 253-261 and Lys-275; that span reads LGAGQFGEV. A phosphotyrosine mark is found at Tyr-306 and Tyr-316. Asp-367 functions as the Proton acceptor in the catalytic mechanism. Tyr-397 carries the phosphotyrosine; by autocatalysis modification. 2 positions are modified to phosphotyrosine: Tyr-460 and Tyr-473. Tyr-508 is subject to Phosphotyrosine; by autocatalysis, CSK and MATK.

The protein belongs to the protein kinase superfamily. Tyr protein kinase family. SRC subfamily. In terms of assembly, interacts with TEC. Interacts (via SH2 domain) with FLT3 (tyrosine phosphorylated). Interacts with LIME1 and with CD79A upon activation of the B-cell antigen receptor. Interacts with the B-cell receptor complex. Interacts with phosphorylated THEMIS2. Interacts with EPOR. Interacts with MS4A2/FCER1B. Interaction (via the SH2 and SH3 domains) with MUC1 is stimulated by IL7 and the subsequent phosphorylation increases the binding between MUC1 and CTNNB1/beta-catenin. Interacts with ADAM15. Interacts with NDFIP2 and more weakly with NDFIP1. Interacts with FASLG. Interacts with KIT. Interacts with HCLS1. Interacts with FCGR2B. Interacts with FCGR1A; the interaction may be indirect. Interacts with CD19, CD22, CD79A and CD79B. Interacts (via SH3 domain) with CBLC, PPP1R15A and PDE4A. Interacts with TGFB1I1. Interacts (via SH3 domain) with PIK3R1, the regulatory subunit of phosphatidylinositol 3-kinase; this interaction enhances phosphatidylinositol 3-kinase activity. Interacts with CSF2RB, the common subunit of the IL3, IL5 and CSF2 receptors. Interacts with PAG1; identified in a complex with PAG1 and STAT3. Interacts with ABL1. Interacts with PTPN6/SHP-1. Interacts (via SH3 domain) with SCIMP (via proline-rich region). This interaction facilitates the phosphorylation of SCIMP 'Tyr-96', which enhances binding of SCIMP to TLR4, and consequently the phosphorylation of TLR4 in response to stimulation by lipopolysaccharide in macrophages. Interacts with LPXN (via LD motif 3) and the interaction is induced upon B-cell antigen receptor (BCR) activation. Interacts (via SH3-domain) with ANKRD54 (via ankyrin repeat region) in an activation-independent status of LYN. Forms a multiprotein complex with ANKRD54 and HCLS1. Interacts (via SH2 and SH3 domains) with UNC119; leading to LYN activation. Interacts with CD36. Interacts with LYN. Interacts with SKAP1 and FYB1; this interaction promotes the phosphorylation of CLNK. Interacts with BCAR1/CAS and NEDD9/HEF1. In terms of processing, ubiquitinated. Ubiquitination is SH3-dependent. Autophosphorylated. Phosphorylated on tyrosine residues in response to KIT signaling. Phosphorylation at Tyr-397 is required for optimal activity. Phosphorylation at Tyr-508 inhibits kinase activity. Phosphorylated at Tyr-508 by CSK. Dephosphorylated by PTPRC/CD45. Becomes rapidly phosphorylated upon activation of the B-cell receptor and the immunoglobulin receptor FCGR1A. Phosphorylated in response to integrin ITGB1 in B-cells. Detected in spleen (at protein level). Expressed predominantly in B-lymphoid and myeloid cells.

It is found in the cell membrane. The protein resides in the nucleus. The protein localises to the cytoplasm. Its subcellular location is the perinuclear region. It localises to the golgi apparatus. It is found in the membrane. It catalyses the reaction L-tyrosyl-[protein] + ATP = O-phospho-L-tyrosyl-[protein] + ADP + H(+). Subject to autoinhibition, mediated by intramolecular interactions between the SH2 domain and the C-terminal phosphotyrosine. Phosphorylation at Tyr-397 is required for optimal activity. Phosphorylated by CSK at Tyr-508; phosphorylation at Tyr-508 inhibits kinase activity. Kinase activity is modulated by dephosphorylation by PTPRC/CD45. Its function is as follows. Non-receptor tyrosine-protein kinase that transmits signals from cell surface receptors and plays an important role in the regulation of innate and adaptive immune responses, hematopoiesis, responses to growth factors and cytokines, integrin signaling, but also responses to DNA damage and genotoxic agents. Functions primarily as negative regulator, but can also function as activator, depending on the context. Required for the initiation of the B-cell response, but also for its down-regulation and termination. Plays an important role in the regulation of B-cell differentiation, proliferation, survival and apoptosis, and is important for immune self-tolerance. Acts downstream of several immune receptors, including the B-cell receptor, CD79A, CD79B, CD5, CD19, CD22, FCER1, FCGR2, FCGR1A, TLR2 and TLR4. Plays a role in the inflammatory response to bacterial lipopolysaccharide. Mediates the responses to cytokines and growth factors in hematopoietic progenitors, platelets, erythrocytes, and in mature myeloid cells, such as dendritic cells, neutrophils and eosinophils. Acts downstream of EPOR, KIT, MPL, the chemokine receptor CXCR4, as well as the receptors for IL3, IL5 and CSF2. Plays an important role in integrin signaling. Regulates cell proliferation, survival, differentiation, migration, adhesion, degranulation, and cytokine release. Involved in the regulation of endothelial activation, neutrophil adhesion and transendothelial migration. Down-regulates signaling pathways by phosphorylation of immunoreceptor tyrosine-based inhibitory motifs (ITIM), that then serve as binding sites for phosphatases, such as PTPN6/SHP-1, PTPN11/SHP-2 and INPP5D/SHIP-1, that modulate signaling by dephosphorylation of kinases and their substrates. Phosphorylates LIME1 in response to CD22 activation. Phosphorylates BTK, CBL, CD5, CD19, CD72, CD79A, CD79B, CSF2RB, DOK1, HCLS1, LILRB3/PIR-B, MS4A2/FCER1B, SYK and TEC. Promotes phosphorylation of SIRPA, PTPN6/SHP-1, PTPN11/SHP-2 and INPP5D/SHIP-1. Required for rapid phosphorylation of FER in response to FCER1 activation. Mediates KIT phosphorylation. Acts as an effector of EPOR (erythropoietin receptor) in controlling KIT expression and may play a role in erythroid differentiation during the switch between proliferation and maturation. Depending on the context, activates or inhibits several signaling cascades. Regulates phosphatidylinositol 3-kinase activity and AKT1 activation. Regulates activation of the MAP kinase signaling cascade, including activation of MAP2K1/MEK1, MAPK1/ERK2, MAPK3/ERK1, MAPK8/JNK1 and MAPK9/JNK2. Mediates activation of STAT5A and/or STAT5B. Phosphorylates LPXN on 'Tyr-72'. Kinase activity facilitates TLR4-TLR6 heterodimerization and signal initiation. Phosphorylates SCIMP on 'Tyr-96'; this enhances binding of SCIMP to TLR4, promoting the phosphorylation of TLR4, and a selective cytokine response to lipopolysaccharide in macrophages. Phosphorylates CLNK. Phosphorylates BCAR1/CAS and NEDD9/HEF1. The sequence is that of Tyrosine-protein kinase Lyn (Lyn) from Rattus norvegicus (Rat).